The primary structure comprises 358 residues: tRNA-specific 2-thiouridylase MnmA (358 aa).

Residues 6–13 and Met-32 each bind ATP; that span reads ALSGGVDS. Catalysis depends on Cys-103, which acts as the Nucleophile. Cys-103 and Cys-201 are joined by a disulfide. Gly-127 contributes to the ATP binding site. The interaction with tRNA stretch occupies residues 151–153; it reads KDQ. Cys-201 (cysteine persulfide intermediate) is an active-site residue.

The protein belongs to the MnmA/TRMU family.

It is found in the cytoplasm. The enzyme catalyses S-sulfanyl-L-cysteinyl-[protein] + uridine(34) in tRNA + AH2 + ATP = 2-thiouridine(34) in tRNA + L-cysteinyl-[protein] + A + AMP + diphosphate + H(+). Catalyzes the 2-thiolation of uridine at the wobble position (U34) of tRNA, leading to the formation of s(2)U34. This chain is tRNA-specific 2-thiouridylase MnmA, found in Thermotoga petrophila (strain ATCC BAA-488 / DSM 13995 / JCM 10881 / RKU-1).